Reading from the N-terminus, the 1960-residue chain is Myosin-9 (1960 aa).

N-acetylalanine is present on Ala2. The tract at residues 2-838 (AQQAADKYLY…RLFTKVKPLL (837 aa)) is mediates interaction with LIMCH1. Lys8 is subject to N6-acetyllysine. The residue at position 11 (Tyr11) is a Phosphotyrosine. The 51-residue stretch at 27–77 (AAKKLVWVPSDKSGFEPASLKEEVGEEAIVELVENGKKVKVNKDDIQKMNP) folds into the Myosin N-terminal SH3-like domain. A Myosin motor domain is found at 81 to 776 (SKVEDMAELT…VLAHLEEERD (696 aa)). Position 102 is an N6-acetyllysine (Lys102). 174 to 181 (GESGAGKT) serves as a coordination point for ATP. An N6-acetyllysine mark is found at Lys299, Lys435, and Lys613. The residue at position 628 (Ser628) is a Phosphoserine. The interval 654–676 (LAKLMATLRNTNPNFVRCIIPNH) is actin-binding. Position 754 is a phosphotyrosine (Tyr754). Residues 779-808 (ITDVIIGFQACCRGYLARKAFAKRQQQLTA) form the IQ domain. Positions 837–1926 (LLQVSRQEEE…LKNKLRRGDL (1090 aa)) form a coiled coil. Lys850 bears the N6-succinyllysine mark. Residues Lys860, Lys975, and Lys1024 each carry the N6-acetyllysine modification. The residue at position 1114 (Ser1114) is a Phosphoserine. The segment at 1117 to 1137 (QEDLESERASRNKAEKQKRDL) is disordered. Over residues 1122–1137 (SERASRNKAEKQKRDL) the composition is skewed to basic and acidic residues. Lys1234, Lys1249, Lys1357, Lys1392, Lys1404, Lys1410, Lys1459, and Lys1638 each carry N6-acetyllysine. The residue at position 1669 (Lys1669) is an N6-succinyllysine. A Phosphoserine modification is found at Ser1714. Lys1793, Lys1802, and Lys1845 each carry N6-acetyllysine. The segment at 1877 to 1918 (RQLEEAEEEAQRANASRRKLQRELEDATETADAMNREVSSLK) is disordered. At Arg1923 the chain carries Omega-N-methylarginine. Positions 1934 to 1960 (VARKGAGDCSDEEVDGKADGAEAKAAE) are disordered. The residue at position 1943 (Ser1943) is a Phosphoserine. Positions 1948–1960 (DGKADGAEAKAAE) are enriched in basic and acidic residues.

Belongs to the TRAFAC class myosin-kinesin ATPase superfamily. Myosin family. In terms of assembly, myosin is a hexameric protein that consists of 2 heavy chain subunits (MHC), 2 alkali light chain subunits (MLC) and 2 regulatory light chain subunits (MLC-2). Interacts with RASIP1. Interacts with DDR1. Interacts with PDLIM2. Interacts with SVIL. Interacts with HTRA3. Interacts with Myo7a. Interacts with CFAP95. Interacts with LIMCH1; independently of the integration of MYH9 into the myosin complex. Interacts with RAB3A. Interacts with ZBED4. Interacts with S100A4; this interaction increases cell motility. In terms of processing, ISGylated. Post-translationally, ubiquitination.

It localises to the cytoplasm. The protein resides in the cytoskeleton. Its subcellular location is the cell cortex. It is found in the cytoplasmic vesicle. The protein localises to the secretory vesicle. It localises to the cortical granule. Cellular myosin that appears to play a role in cytokinesis, cell shape, and specialized functions such as secretion and capping. Required for cortical actin clearance prior to oocyte exocytosis. Promotes cell motility in conjunction with S100A4. During cell spreading, plays an important role in cytoskeleton reorganization, focal contact formation (in the margins but not the central part of spreading cells), and lamellipodial retraction; this function is mechanically antagonized by MYH10. The protein is Myosin-9 (MYH9) of Canis lupus familiaris (Dog).